The primary structure comprises 954 residues: Chromosomal passenger complex protein BIR1 (954 aa).

BIR repeat units follow at residues 20–117 (RLRT…LLIY) and 153–241 (RKFT…YFFQ). Zn(2+) is bound by residues Cys-208, Cys-211, His-228, and Cys-237. A disordered region spans residues 375–419 (NVQLTQSSSPIKKKRKFKRISPRKIFDEEDSEHSLNNNSANGDNK). Residues 385–396 (IKKKRKFKRISP) show a composition bias toward basic residues. Residues Ser-477, Ser-508, and Ser-552 each carry the phosphoserine modification. Disordered stretches follow at residues 541–645 (DIDR…SGKV) and 661–685 (FSASDFSPSSQSEQSSKSSSVISTP). A compositionally biased stretch (basic and acidic residues) spans 556–583 (PKTHELIRDNSEKREAQNGEFRHQKDST). A Phosphoserine modification is found at Ser-587. Residues 593-604 (SNKSGDNSSNIT) are compositionally biased toward polar residues. Ser-751 and Ser-765 each carry phosphoserine. The tract at residues 798 to 839 (LVSGTSSYPRNSRLEEQRKETSTSLADNSKKGSSFNEGNNEK) is disordered. Residues 809-818 (SRLEEQRKET) are compositionally biased toward basic and acidic residues. The span at 819-835 (STSLADNSKKGSSFNEG) shows a compositional bias: polar residues.

Component of the CPC complex at least composed of IPL1, BIR1 and SLI15. Interacts with CBF2/NDC10. Interacts with CBF3D/SKP1.

Component of the chromosomal passenger complex (CPC), a complex that acts as a key regulator of chromosome segregation and cytokinesis. The sequence is that of Chromosomal passenger complex protein BIR1 (BIR1) from Saccharomyces cerevisiae (strain ATCC 204508 / S288c) (Baker's yeast).